The primary structure comprises 79 residues: WAP four-disulfide core domain protein 10A (79 aa).

Positions 1–21 (MAPQTLLPVLVLCVLLLQAQG) are cleaved as a signal peptide. In terms of domain architecture, WAP spans 34-79 (LSPEIKVCQQQPKLYLCKHLCESHRDCQANNICCSTYCGNVCMSIL). 4 cysteine pairs are disulfide-bonded: C41/C67, C50/C71, C54/C66, and C60/C75.

The protein localises to the secreted. The polypeptide is WAP four-disulfide core domain protein 10A (WFDC10A) (Homo sapiens (Human)).